Reading from the N-terminus, the 305-residue chain is Putative ankyrin repeat protein RF_0580 (305 aa).

7 ANK repeats span residues 5–34, 39–68, 72–101, 107–136, 140–169, 173–202, and 206–235; these read YNKN…NIDE, RGET…SPNI, SGQT…NIDL, CGHS…DINS, FGAS…DVNA, YEDT…DVNI, and NNFT…TIKI.

The protein is Putative ankyrin repeat protein RF_0580 of Rickettsia felis (strain ATCC VR-1525 / URRWXCal2) (Rickettsia azadi).